Reading from the N-terminus, the 30-residue chain is Photosystem I reaction center subunit XII (30 aa).

A helical membrane pass occupies residues 6–26 (VFTILAIALVPAVMALLLGSA).

Belongs to the PsaM family.

The protein localises to the cellular thylakoid membrane. This Synechococcus sp. (strain JA-2-3B'a(2-13)) (Cyanobacteria bacterium Yellowstone B-Prime) protein is Photosystem I reaction center subunit XII.